Consider the following 490-residue polypeptide: Cobyric acid synthase (490 aa).

Residues 252–439 enclose the GATase cobBQ-type domain; that stretch reads RLKVVVPVLP…LHGLFESTAA (188 aa). Cys333 functions as the Nucleophile in the catalytic mechanism. Residue His431 is part of the active site.

The protein belongs to the CobB/CobQ family. CobQ subfamily.

Its pathway is cofactor biosynthesis; adenosylcobalamin biosynthesis. In terms of biological role, catalyzes amidations at positions B, D, E, and G on adenosylcobyrinic A,C-diamide. NH(2) groups are provided by glutamine, and one molecule of ATP is hydrogenolyzed for each amidation. The sequence is that of Cobyric acid synthase from Pseudomonas aeruginosa (strain ATCC 15692 / DSM 22644 / CIP 104116 / JCM 14847 / LMG 12228 / 1C / PRS 101 / PAO1).